A 440-amino-acid chain; its full sequence is Glutamate--tRNA ligase 1 (440 aa).

Positions 7–17 (PSPTGYLHVGN) match the 'HIGH' region motif. Positions 238 to 242 (KISKR) match the 'KMSKS' region motif. An ATP-binding site is contributed by K241.

The protein belongs to the class-I aminoacyl-tRNA synthetase family. Glutamate--tRNA ligase type 1 subfamily. In terms of assembly, monomer.

The protein resides in the cytoplasm. The catalysed reaction is tRNA(Glu) + L-glutamate + ATP = L-glutamyl-tRNA(Glu) + AMP + diphosphate. In terms of biological role, catalyzes the attachment of glutamate to tRNA(Glu) in a two-step reaction: glutamate is first activated by ATP to form Glu-AMP and then transferred to the acceptor end of tRNA(Glu). The polypeptide is Glutamate--tRNA ligase 1 (Wolbachia sp. subsp. Brugia malayi (strain TRS)).